The following is a 92-amino-acid chain: Putative septation protein SpoVG (92 aa).

Belongs to the SpoVG family.

Functionally, could be involved in septation. The polypeptide is Putative septation protein SpoVG (Thermoanaerobacter pseudethanolicus (strain ATCC 33223 / 39E) (Clostridium thermohydrosulfuricum)).